The following is a 121-amino-acid chain: Small ribosomal subunit protein uS13 (121 aa).

The tract at residues 97–121 is disordered; the sequence is VRGQRTRTNARTRRGARKTVAGKKK. The segment covering 100 to 121 has biased composition (basic residues); sequence QRTRTNARTRRGARKTVAGKKK.

Belongs to the universal ribosomal protein uS13 family. In terms of assembly, part of the 30S ribosomal subunit. Forms a loose heterodimer with protein S19. Forms two bridges to the 50S subunit in the 70S ribosome.

Its function is as follows. Located at the top of the head of the 30S subunit, it contacts several helices of the 16S rRNA. In the 70S ribosome it contacts the 23S rRNA (bridge B1a) and protein L5 of the 50S subunit (bridge B1b), connecting the 2 subunits; these bridges are implicated in subunit movement. Contacts the tRNAs in the A and P-sites. This chain is Small ribosomal subunit protein uS13, found in Parasynechococcus marenigrum (strain WH8102).